Reading from the N-terminus, the 734-residue chain is Myb-like protein J (734 aa).

3 disordered regions span residues 1–35 (MPNN…FKSN), 128–196 (QKDQ…PTMM), and 221–378 (SPIS…LKQG). Residues 131 to 142 (QQQKEQQKEQQK) are compositionally biased toward basic and acidic residues. The span at 164–173 (TTTTTTTTTT) shows a compositional bias: low complexity. Polar residues predominate over residues 174–196 (AVEQQGAEQQDTNLNSTSSPTMM). Residues 221–230 (SPISSSLNNS) show a composition bias toward low complexity. Positions 231 to 257 (QDNTKPVSPDNIENTSNPMDTSSSNGK) are enriched in polar residues. Residues 258-372 (TPTITPIVTP…GGKTNPTGKK (115 aa)) are compositionally biased toward low complexity. An HTH myb-type domain is found at 371 to 426 (KKTSLKQGWTKEEHIRFLNGIQIHGKGAWKEIAQFVGTRTPTQIQSHAQKYYLRQK). The segment at residues 399–422 (WKEIAQFVGTRTPTQIQSHAQKYY) is a DNA-binding region (H-T-H motif). Residues 445–454 (DDNLNNSNKN) show a composition bias toward low complexity. The disordered stretch occupies residues 445–623 (DDNLNNSNKN…GNILRHQNSH (179 aa)). Positions 455–468 (NVDKNKQDDKEKKT) are enriched in basic and acidic residues. Residues 469–478 (QKTKKTKSKS) are compositionally biased toward basic residues. Low complexity-rich tracts occupy residues 489 to 543 (QQQQ…SSQT) and 574 to 615 (NNNN…NEGN).

Its subcellular location is the nucleus. This Dictyostelium discoideum (Social amoeba) protein is Myb-like protein J (mybJ).